Reading from the N-terminus, the 354-residue chain is Elongation factor Ts (354 aa).

The segment at 81–84 (TDFV) is involved in Mg(2+) ion dislocation from EF-Tu.

Belongs to the EF-Ts family.

The protein resides in the cytoplasm. Its function is as follows. Associates with the EF-Tu.GDP complex and induces the exchange of GDP to GTP. It remains bound to the aminoacyl-tRNA.EF-Tu.GTP complex up to the GTP hydrolysis stage on the ribosome. This is Elongation factor Ts from Campylobacter curvus (strain 525.92).